Reading from the N-terminus, the 500-residue chain is L-arabinose isomerase (500 aa).

Residues glutamate 306, glutamate 333, histidine 349, and histidine 448 each contribute to the Mn(2+) site.

It belongs to the arabinose isomerase family. Requires Mn(2+) as cofactor.

It carries out the reaction beta-L-arabinopyranose = L-ribulose. Its pathway is carbohydrate degradation; L-arabinose degradation via L-ribulose; D-xylulose 5-phosphate from L-arabinose (bacterial route): step 1/3. Functionally, catalyzes the conversion of L-arabinose to L-ribulose. This chain is L-arabinose isomerase, found in Shewanella sp. (strain ANA-3).